Here is a 968-residue protein sequence, read N- to C-terminus: RNA polymerase-associated protein RapA (968 aa).

The Helicase ATP-binding domain occupies 164–334; the sequence is EVGQRHAPRV…FARLRLLDPD (171 aa). 177–184 serves as a coordination point for ATP; it reads DEVGLGKT. Residues 280 to 283 carry the DEAH box motif; sequence DEAH. The Helicase C-terminal domain occupies 490–644; it reads RVEWLLNYLV…TCPTGRTIYD (155 aa).

This sequence belongs to the SNF2/RAD54 helicase family. RapA subfamily. Interacts with the RNAP. Has a higher affinity for the core RNAP than for the holoenzyme. Its ATPase activity is stimulated by binding to RNAP.

Its function is as follows. Transcription regulator that activates transcription by stimulating RNA polymerase (RNAP) recycling in case of stress conditions such as supercoiled DNA or high salt concentrations. Probably acts by releasing the RNAP, when it is trapped or immobilized on tightly supercoiled DNA. Does not activate transcription on linear DNA. Probably not involved in DNA repair. This Yersinia pestis bv. Antiqua (strain Antiqua) protein is RNA polymerase-associated protein RapA.